Reading from the N-terminus, the 421-residue chain is Signal recognition particle receptor FtsY (421 aa).

Over residues 1–10 (MFSFFRRKKK) the composition is skewed to basic residues. Residues 1-31 (MFSFFRRKKKQETPALEEAQIQETAAKAESE) form a disordered region. GTP-binding positions include 228–235 (GINGAGKT), 309–313 (DTAGR), and 373–376 (TKLD).

This sequence belongs to the GTP-binding SRP family. FtsY subfamily. In terms of assembly, part of the signal recognition particle protein translocation system, which is composed of SRP and FtsY. SRP is a ribonucleoprotein composed of Ffh and a 4.5S RNA molecule.

It localises to the cell inner membrane. The protein localises to the cytoplasm. The catalysed reaction is GTP + H2O = GDP + phosphate + H(+). Functionally, involved in targeting and insertion of nascent membrane proteins into the cytoplasmic membrane. Acts as a receptor for the complex formed by the signal recognition particle (SRP) and the ribosome-nascent chain (RNC). Interaction with SRP-RNC leads to the transfer of the RNC complex to the Sec translocase for insertion into the membrane, the hydrolysis of GTP by both Ffh and FtsY, and the dissociation of the SRP-FtsY complex into the individual components. This is Signal recognition particle receptor FtsY from Neisseria meningitidis serogroup A / serotype 4A (strain DSM 15465 / Z2491).